Reading from the N-terminus, the 277-residue chain is Undecaprenyl-diphosphatase 1 (277 aa).

The next 7 helical transmembrane spans lie at 46-66 (VVGFSAVIQVGAIAAVLVYFF), 95-115 (WWVIYATIPIVIVGLAAKSLI), 119-139 (LASLWVVAASLIVGSGVMWAA), 165-185 (ILALLFPGFSRSGATMSTALI), 191-211 (VAATRLSFFLGIPALTGAGLY), 216-236 (ALGTGVGVAPLAVGTIVSFVV), and 256-276 (FVIYRIVIGVLLLGLLGTGVL).

It belongs to the UppP family.

The protein resides in the cell membrane. The catalysed reaction is di-trans,octa-cis-undecaprenyl diphosphate + H2O = di-trans,octa-cis-undecaprenyl phosphate + phosphate + H(+). In terms of biological role, catalyzes the dephosphorylation of undecaprenyl diphosphate (UPP). Confers resistance to bacitracin. The chain is Undecaprenyl-diphosphatase 1 from Streptomyces avermitilis (strain ATCC 31267 / DSM 46492 / JCM 5070 / NBRC 14893 / NCIMB 12804 / NRRL 8165 / MA-4680).